The following is a 124-amino-acid chain: Ribonuclease pancreatic (124 aa).

Residues K7 and R10 each contribute to the substrate site. H12 serves as the catalytic Proton acceptor. Intrachain disulfides connect C26–C84, C40–C95, C58–C110, and C65–C72. N-linked (GlcNAc...) asparagine; partial glycosylation is present at N34. Residues 41–45 (KPVBT), K66, and R85 contribute to the substrate site. H119 functions as the Proton donor in the catalytic mechanism.

This sequence belongs to the pancreatic ribonuclease family. As to quaternary structure, monomer. Interacts with and forms tight 1:1 complexes with RNH1. Dimerization of two such complexes may occur. Interaction with RNH1 inhibits this protein. Pancreas.

It localises to the secreted. The catalysed reaction is an [RNA] containing cytidine + H2O = an [RNA]-3'-cytidine-3'-phosphate + a 5'-hydroxy-ribonucleotide-3'-[RNA].. It catalyses the reaction an [RNA] containing uridine + H2O = an [RNA]-3'-uridine-3'-phosphate + a 5'-hydroxy-ribonucleotide-3'-[RNA].. Endonuclease that catalyzes the cleavage of RNA on the 3' side of pyrimidine nucleotides. Acts on single-stranded and double-stranded RNA. The protein is Ribonuclease pancreatic (RNASE1) of Damaliscus korrigum (Topi).